We begin with the raw amino-acid sequence, 90 residues long: UPF0367 protein P9301_01411 (90 aa).

Belongs to the UPF0367 family.

In Prochlorococcus marinus (strain MIT 9301), this protein is UPF0367 protein P9301_01411.